Here is a 164-residue protein sequence, read N- to C-terminus: 6,7-dimethyl-8-ribityllumazine synthase (164 aa).

Residues phenylalanine 28, alanine 62–glutamate 64, and alanine 86–isoleucine 88 each bind 5-amino-6-(D-ribitylamino)uracil. Glutamate 91 to threonine 92 provides a ligand contact to (2S)-2-hydroxy-3-oxobutyl phosphate. Histidine 94 acts as the Proton donor in catalysis. Asparagine 119 contacts 5-amino-6-(D-ribitylamino)uracil. Position 133 (arginine 133) interacts with (2S)-2-hydroxy-3-oxobutyl phosphate.

This sequence belongs to the DMRL synthase family.

The catalysed reaction is (2S)-2-hydroxy-3-oxobutyl phosphate + 5-amino-6-(D-ribitylamino)uracil = 6,7-dimethyl-8-(1-D-ribityl)lumazine + phosphate + 2 H2O + H(+). Its pathway is cofactor biosynthesis; riboflavin biosynthesis; riboflavin from 2-hydroxy-3-oxobutyl phosphate and 5-amino-6-(D-ribitylamino)uracil: step 1/2. Its function is as follows. Catalyzes the formation of 6,7-dimethyl-8-ribityllumazine by condensation of 5-amino-6-(D-ribitylamino)uracil with 3,4-dihydroxy-2-butanone 4-phosphate. This is the penultimate step in the biosynthesis of riboflavin. This is 6,7-dimethyl-8-ribityllumazine synthase from Nitrosomonas europaea (strain ATCC 19718 / CIP 103999 / KCTC 2705 / NBRC 14298).